A 235-amino-acid polypeptide reads, in one-letter code: Elongation factor Tu, chloroplastic (235 aa).

Positions 1-125 (KNMITGAAQM…SVDSYIPTPI (125 aa)) constitute a tr-type G domain. Position 47–50 (47–50 (NKED)) interacts with GTP.

Belongs to the TRAFAC class translation factor GTPase superfamily. Classic translation factor GTPase family. EF-Tu/EF-1A subfamily.

The protein localises to the plastid. Its subcellular location is the chloroplast. It catalyses the reaction GTP + H2O = GDP + phosphate + H(+). Its function is as follows. GTP hydrolase that promotes the GTP-dependent binding of aminoacyl-tRNA to the A-site of ribosomes during protein biosynthesis. This Costaria costata (Five-ribbed kelp) protein is Elongation factor Tu, chloroplastic (tufA).